We begin with the raw amino-acid sequence, 144 residues long: Large ribosomal subunit protein uL13 (144 aa).

It belongs to the universal ribosomal protein uL13 family. Part of the 50S ribosomal subunit.

This protein is one of the early assembly proteins of the 50S ribosomal subunit, although it is not seen to bind rRNA by itself. It is important during the early stages of 50S assembly. The sequence is that of Large ribosomal subunit protein uL13 from Nitratidesulfovibrio vulgaris (strain ATCC 29579 / DSM 644 / CCUG 34227 / NCIMB 8303 / VKM B-1760 / Hildenborough) (Desulfovibrio vulgaris).